A 341-amino-acid chain; its full sequence is tRNA N6-adenosine threonylcarbamoyltransferase (341 aa).

Fe cation-binding residues include histidine 117 and histidine 121. Residues 139–143 (VVSGG), aspartate 172, glycine 185, aspartate 189, and asparagine 278 each bind substrate. Aspartate 307 provides a ligand contact to Fe cation.

It belongs to the KAE1 / TsaD family. Requires Fe(2+) as cofactor.

It localises to the cytoplasm. It carries out the reaction L-threonylcarbamoyladenylate + adenosine(37) in tRNA = N(6)-L-threonylcarbamoyladenosine(37) in tRNA + AMP + H(+). In terms of biological role, required for the formation of a threonylcarbamoyl group on adenosine at position 37 (t(6)A37) in tRNAs that read codons beginning with adenine. Is involved in the transfer of the threonylcarbamoyl moiety of threonylcarbamoyl-AMP (TC-AMP) to the N6 group of A37, together with TsaE and TsaB. TsaD likely plays a direct catalytic role in this reaction. This is tRNA N6-adenosine threonylcarbamoyltransferase from Bacillus licheniformis (strain ATCC 14580 / DSM 13 / JCM 2505 / CCUG 7422 / NBRC 12200 / NCIMB 9375 / NCTC 10341 / NRRL NRS-1264 / Gibson 46).